A 579-amino-acid polypeptide reads, in one-letter code: Adenine/guanine permease AZG1 (579 aa).

The next 12 helical transmembrane spans lie at 52–72, 131–151, 183–203, 221–241, 260–280, 292–312, 320–340, 379–399, 414–434, 459–479, 480–500, and 514–534; these read AGTATFLTMAYILAVNASILS, LIVATVAASLIGCVIMGLMAN, TALAAVFIEGLIFLFISAIGF, AGIGLFLAFIGLQNNQGIGLV, ISLAPVITSANGTVSLLAGGS, MESPTFWLGIVGFVIIAYCLV, IYGIVFVTAVSWFRNTEVTAF, FWEALVTFLYVDILDTTGTLY, FAGQYFAFMSDASAIVIGSLL, AITVAVYFLLAMFFTPLLASI, PAWAVGPPLILVGVMMMKSVT, and FVTMILMPLTYSVAYGLIGGI.

It belongs to the nucleobase:cation symporter-2 (NCS2) (TC 2.A.40) family. Azg-like subfamily.

Its subcellular location is the membrane. Its function is as follows. Transports natural purines (adenine and guanine) as well as purine analogs. Confers sensitivity to 8-azaadenine and 8-azaguanine (8-azg). In Arabidopsis thaliana (Mouse-ear cress), this protein is Adenine/guanine permease AZG1 (AZG1).